Here is a 134-residue protein sequence, read N- to C-terminus: D-ribose pyranase (134 aa).

Residue histidine 20 is the Proton donor of the active site. Residues aspartate 28, histidine 101, and 123 to 125 (YSN) contribute to the substrate site.

The protein belongs to the RbsD / FucU family. RbsD subfamily. In terms of assembly, homodecamer.

The protein resides in the cytoplasm. The catalysed reaction is beta-D-ribopyranose = beta-D-ribofuranose. The protein operates within carbohydrate metabolism; D-ribose degradation; D-ribose 5-phosphate from beta-D-ribopyranose: step 1/2. Functionally, catalyzes the interconversion of beta-pyran and beta-furan forms of D-ribose. The chain is D-ribose pyranase from Pseudomonas entomophila (strain L48).